The chain runs to 949 residues: Inactive atromentin synthetase invA3 (949 aa).

The tract at residues 38-460 is adenylation (A) domain; it reads RAVSQYPNHE…SGRIKDTVVV (423 aa). Residues 592–670 enclose the Carrier domain; it reads ALSTETEKTL…NLAKYVDSLV (79 aa). The interval 597–667 is thiolation and peptide carrier (T) domain; it reads TEKTLAGIYA…VISNLAKYVD (71 aa). At Ser629 the chain carries O-(pantetheine 4'-phosphoryl)serine. The segment at 693–934 is thioesterase (TE) domain; it reads PIFMVHPGMA…YTLMDFDHVA (242 aa).

It belongs to the ATP-dependent AMP-binding enzyme family.

Functionally, inactive atromentin synthetase homolog. While the invA3 adenylation (A) domain is capable of adenylating 4-hydroxyphenylpyruvate (4-HPP), the invA3 enzyme is inactive because of its non-functional thioesterase (TE) domain. In Paxillus involutus (Naked brimcap), this protein is Inactive atromentin synthetase invA3 (invA3).